Reading from the N-terminus, the 194-residue chain is dTTP/UTP pyrophosphatase (194 aa).

The active-site Proton acceptor is Asp-73.

This sequence belongs to the Maf family. YhdE subfamily. A divalent metal cation serves as cofactor.

The protein localises to the cytoplasm. It catalyses the reaction dTTP + H2O = dTMP + diphosphate + H(+). The catalysed reaction is UTP + H2O = UMP + diphosphate + H(+). Nucleoside triphosphate pyrophosphatase that hydrolyzes dTTP and UTP. May have a dual role in cell division arrest and in preventing the incorporation of modified nucleotides into cellular nucleic acids. This chain is dTTP/UTP pyrophosphatase, found in Clostridium botulinum (strain ATCC 19397 / Type A).